The chain runs to 203 residues: Protein S40-6 (203 aa).

The tract at residues 1-33 (MAKGRKPTTMNRSDRYLGSYTYGDSHGNSVTDE) is disordered.

It belongs to the senescence regulator S40 family.

It localises to the cytoplasm. The polypeptide is Protein S40-6 (Arabidopsis thaliana (Mouse-ear cress)).